The sequence spans 308 residues: Nuclear transcription factor Y subunit A-5 (308 aa).

The segment covering 1–10 has biased composition (basic and acidic residues); sequence MQVFQRKEDS. Disordered stretches follow at residues 1–26 and 49–71; these read MQVF…IQGS and GLQL…GGGE. Positions 11 to 26 are enriched in polar residues; it reads SWGNSMPTTNSNIQGS. The Subunit association domain (SAD) signature appears at 181–204; sequence FVNAKQYHAILRRRKHRAKLEAQN. The segment at residues 211 to 236 is a DNA-binding region (NFYA/HAP2-type); it reads KPYLHESRHLHALKRARGSGGRFLNT. Residues 251–273 are disordered; sequence MANGQNFSMSPHGGGSGIGSSSI.

The protein belongs to the NFYA/HAP2 subunit family. As to quaternary structure, heterotrimeric transcription factor composed of three components, NF-YA, NF-YB and NF-YC. NF-YB and NF-YC must interact and dimerize for NF-YA association and DNA binding. As to expression, expressed in the whole plant, except roots. Present in etiolated seedlings.

Its subcellular location is the nucleus. In terms of biological role, stimulates the transcription of various genes by recognizing and binding to a CCAAT motif in promoters. Involved in the blue light (BL) and abscisic acid (ABA) signaling pathways. In Arabidopsis thaliana (Mouse-ear cress), this protein is Nuclear transcription factor Y subunit A-5 (NFYA5).